The sequence spans 220 residues: Putative GED domain-containing protein DNM1P46 (220 aa).

The segment at Val-18–Met-46 is disordered. Residues Gln-28 to Gly-38 show a composition bias toward basic and acidic residues. The GED domain occupies Met-54 to Thr-149. Residues Asp-173 to Lys-194 form a disordered region. Residues Ala-185–Lys-194 show a composition bias toward basic and acidic residues.

The sequence is that of Putative GED domain-containing protein DNM1P46 (DNM1P46) from Homo sapiens (Human).